We begin with the raw amino-acid sequence, 79 residues long: Translational regulator CsrA (79 aa).

It belongs to the CsrA/RsmA family. As to quaternary structure, homodimer; the beta-strands of each monomer intercalate to form a hydrophobic core, while the alpha-helices form wings that extend away from the core.

The protein resides in the cytoplasm. Its function is as follows. A translational regulator that binds mRNA to regulate translation initiation and/or mRNA stability. Usually binds in the 5'-UTR at or near the Shine-Dalgarno sequence preventing ribosome-binding, thus repressing translation. Its main target seems to be the major flagellin gene, while its function is anatagonized by FliW. The chain is Translational regulator CsrA from Helicobacter hepaticus (strain ATCC 51449 / 3B1).